Reading from the N-terminus, the 249-residue chain is Aspartate/glutamate leucyltransferase (249 aa).

Belongs to the R-transferase family. Bpt subfamily.

The protein resides in the cytoplasm. The catalysed reaction is N-terminal L-glutamyl-[protein] + L-leucyl-tRNA(Leu) = N-terminal L-leucyl-L-glutamyl-[protein] + tRNA(Leu) + H(+). It catalyses the reaction N-terminal L-aspartyl-[protein] + L-leucyl-tRNA(Leu) = N-terminal L-leucyl-L-aspartyl-[protein] + tRNA(Leu) + H(+). Functionally, functions in the N-end rule pathway of protein degradation where it conjugates Leu from its aminoacyl-tRNA to the N-termini of proteins containing an N-terminal aspartate or glutamate. This chain is Aspartate/glutamate leucyltransferase, found in Brucella canis (strain ATCC 23365 / NCTC 10854 / RM-666).